The chain runs to 227 residues: Phosphoribosylformylglycinamidine synthase subunit PurQ (227 aa).

Residues 3 to 227 (FAVIVFPGSN…NWRESHVTAS (225 aa)) enclose the Glutamine amidotransferase type-1 domain. Cys-86 serves as the catalytic Nucleophile. Residues His-194 and Glu-196 contribute to the active site.

Part of the FGAM synthase complex composed of 1 PurL, 1 PurQ and 2 PurS subunits.

It is found in the cytoplasm. It catalyses the reaction N(2)-formyl-N(1)-(5-phospho-beta-D-ribosyl)glycinamide + L-glutamine + ATP + H2O = 2-formamido-N(1)-(5-O-phospho-beta-D-ribosyl)acetamidine + L-glutamate + ADP + phosphate + H(+). It carries out the reaction L-glutamine + H2O = L-glutamate + NH4(+). It functions in the pathway purine metabolism; IMP biosynthesis via de novo pathway; 5-amino-1-(5-phospho-D-ribosyl)imidazole from N(2)-formyl-N(1)-(5-phospho-D-ribosyl)glycinamide: step 1/2. Its function is as follows. Part of the phosphoribosylformylglycinamidine synthase complex involved in the purines biosynthetic pathway. Catalyzes the ATP-dependent conversion of formylglycinamide ribonucleotide (FGAR) and glutamine to yield formylglycinamidine ribonucleotide (FGAM) and glutamate. The FGAM synthase complex is composed of three subunits. PurQ produces an ammonia molecule by converting glutamine to glutamate. PurL transfers the ammonia molecule to FGAR to form FGAM in an ATP-dependent manner. PurS interacts with PurQ and PurL and is thought to assist in the transfer of the ammonia molecule from PurQ to PurL. The sequence is that of Phosphoribosylformylglycinamidine synthase subunit PurQ from Shouchella clausii (strain KSM-K16) (Alkalihalobacillus clausii).